The primary structure comprises 141 residues: Period circadian protein (141 aa).

Positions Glu-1–Lys-141 are disordered. A compositionally biased stretch (polar residues) spans His-11–Val-23. Residues Gly-29–Thr-68 are compositionally biased toward gly residues. 19 consecutive repeat copies span residues Gly-30–Thr-31, Gly-33–Thr-34, Gly-35–Thr-36, Gly-37–Thr-38, Gly-39–Thr-40, Gly-41–Thr-42, Gly-43–Thr-44, Gly-45–Thr-46, Gly-47–Thr-48, Gly-49–Thr-50, Gly-51–Thr-52, Gly-53–Thr-54, Gly-55–Thr-56, Gly-57–Thr-58, Gly-59–Thr-60, Gly-61–Thr-62, Gly-63–Thr-64, Gly-65–Thr-66, and Gly-67–Thr-68. The tract at residues Gly-30–Thr-94 is 32 X 2 AA approximate tandem repeats of G-T. Residues Ala-69–Ser-70 form a 20; approximate repeat. Residues Ala-69–Ala-85 are compositionally biased toward low complexity. Repeat 21 spans residues Gly-71–Thr-72. A 22; approximate repeat occupies Ala-73–Thr-74. Residues Gly-75 to Thr-76 form repeat 23. A 24; approximate repeat occupies Ala-77–Ser-78. Repeat unit 25 spans residues Gly-79–Thr-80. A 26; approximate repeat occupies Ala-81–Thr-82. The stretch at Gly-83–Thr-84 is repeat 27. The stretch at Ala-85–Asn-86 is one 28; approximate repeat. Tandem repeats lie at residues Gly-87–Thr-88 and Gly-89–Thr-90. The 31; approximate repeat unit spans residues Gly-91 to Lys-92. Residues Gly-93–Thr-94 form repeat 32. Residues Ser-101–Thr-113 are compositionally biased toward gly residues. Low complexity predominate over residues Gly-114–Thr-129. The segment covering Pro-130–Lys-141 has biased composition (polar residues).

Forms a heterodimer with timeless (TIM); the complex then translocates into the nucleus. Phosphorylated with a circadian rhythmicity, probably by the double-time protein (dbt). Phosphorylation could be implicated in the stability of per monomer and in the formation of heterodimer per-tim.

The protein resides in the nucleus. The protein localises to the cytoplasm. It is found in the perinuclear region. Its function is as follows. Essential for biological clock functions. Determines the period length of circadian and ultradian rhythms; an increase in PER dosage leads to shortened circadian rhythms and a decrease leads to lengthened circadian rhythms. Essential for the circadian rhythmicity of locomotor activity, eclosion behavior, and for the rhythmic component of the male courtship song that originates in the thoracic nervous system. The biological cycle depends on the rhythmic formation and nuclear localization of the TIM-PER complex. Light induces the degradation of TIM, which promotes elimination of PER. Nuclear activity of the heterodimer coordinatively regulates PER and TIM transcription through a negative feedback loop. Behaves as a negative element in circadian transcriptional loop. Does not appear to bind DNA, suggesting indirect transcriptional inhibition. In Drosophila serrata (Fruit fly), this protein is Period circadian protein (per).